The primary structure comprises 147 residues: MRTTFLAKPGEIEKKWYIIDAKDVVLGRLSTVVASILRGKNKPTFTPNVDMGDHVIIINAAEVKLTGKKATDKVYYHHSNHPGGLKARTAGNYREFNPEKLLELSIHGMLPKNTLGRKQGLNLHVYAGAEHAHAAQQPEALDINKLV.

The protein belongs to the universal ribosomal protein uL13 family. Part of the 50S ribosomal subunit.

Functionally, this protein is one of the early assembly proteins of the 50S ribosomal subunit, although it is not seen to bind rRNA by itself. It is important during the early stages of 50S assembly. The polypeptide is Large ribosomal subunit protein uL13 (Leuconostoc citreum (strain KM20)).